The sequence spans 259 residues: UPF0246 protein PputGB1_4560 (259 aa).

Belongs to the UPF0246 family.

The chain is UPF0246 protein PputGB1_4560 from Pseudomonas putida (strain GB-1).